A 263-amino-acid chain; its full sequence is 3-methyl-2-oxobutanoate hydroxymethyltransferase (263 aa).

Mg(2+)-binding residues include aspartate 45 and aspartate 84. 3-methyl-2-oxobutanoate is bound by residues 45-46 (DS), aspartate 84, and lysine 112. Position 114 (glutamate 114) interacts with Mg(2+). Residue glutamate 181 is the Proton acceptor of the active site.

Belongs to the PanB family. Homodecamer; pentamer of dimers. Mg(2+) is required as a cofactor.

The protein localises to the cytoplasm. The catalysed reaction is 3-methyl-2-oxobutanoate + (6R)-5,10-methylene-5,6,7,8-tetrahydrofolate + H2O = 2-dehydropantoate + (6S)-5,6,7,8-tetrahydrofolate. It functions in the pathway cofactor biosynthesis; (R)-pantothenate biosynthesis; (R)-pantoate from 3-methyl-2-oxobutanoate: step 1/2. In terms of biological role, catalyzes the reversible reaction in which hydroxymethyl group from 5,10-methylenetetrahydrofolate is transferred onto alpha-ketoisovalerate to form ketopantoate. In Photorhabdus laumondii subsp. laumondii (strain DSM 15139 / CIP 105565 / TT01) (Photorhabdus luminescens subsp. laumondii), this protein is 3-methyl-2-oxobutanoate hydroxymethyltransferase.